Reading from the N-terminus, the 1340-residue chain is Early transcription factor large subunit homolog (1340 aa).

This sequence belongs to the asfivirus G1340L family.

The protein localises to the virion. Its function is as follows. Putative initation factor. The polypeptide is Early transcription factor large subunit homolog (African swine fever virus (isolate Tick/South Africa/Pretoriuskop Pr4/1996) (ASFV)).